We begin with the raw amino-acid sequence, 487 residues long: L-tartrate/succinate antiporter (487 aa).

Transmembrane regions (helical) follow at residues 10 to 30 (YLAP…AGLE), 33 to 53 (TWLY…EPVP), 54 to 74 (GAVV…WLLF), 93 to 113 (WAVS…FMFG), 137 to 157 (TLFL…VTPS), 189 to 209 (IGSY…AIFL), 236 to 256 (FLGM…LAYV), 292 to 312 (LMVG…AAMV), 313 to 333 (GYSV…DIVS), 340 to 360 (VFFW…TGFI), 370 to 390 (SLSG…FYLL), 393 to 413 (FFAS…AAAL), 418 to 438 (IPLP…SILT), and 465 to 485 (IFGL…MPVV).

It belongs to the SLC13A/DASS transporter (TC 2.A.47) family. DIT1 subfamily.

Its subcellular location is the cell inner membrane. The catalysed reaction is (2R,3R)-tartrate(out) + succinate(in) = (2R,3R)-tartrate(in) + succinate(out). In terms of biological role, catalyzes the uptake of tartrate in exchange for intracellular succinate. Essential for anaerobic L-tartrate fermentation. The protein is L-tartrate/succinate antiporter (ttdT) of Escherichia coli O157:H7.